We begin with the raw amino-acid sequence, 200 residues long: 3-isopropylmalate dehydratase small subunit (200 aa).

The protein belongs to the LeuD family. LeuD type 1 subfamily. As to quaternary structure, heterodimer of LeuC and LeuD.

The enzyme catalyses (2R,3S)-3-isopropylmalate = (2S)-2-isopropylmalate. It functions in the pathway amino-acid biosynthesis; L-leucine biosynthesis; L-leucine from 3-methyl-2-oxobutanoate: step 2/4. In terms of biological role, catalyzes the isomerization between 2-isopropylmalate and 3-isopropylmalate, via the formation of 2-isopropylmaleate. This Pectobacterium carotovorum subsp. carotovorum (strain PC1) protein is 3-isopropylmalate dehydratase small subunit.